The chain runs to 59 residues: Large ribosomal subunit protein bL32 (59 aa).

A disordered region spans residues 1–59 (MAVQQNKKSPSKRGMHRSHDALTAPALSVDSTTGEVHRPHHISPNGMYRGRKVVKAKGE). A compositionally biased stretch (basic residues) spans 49-59 (RGRKVVKAKGE).

This sequence belongs to the bacterial ribosomal protein bL32 family.

This Neisseria meningitidis serogroup B (strain ATCC BAA-335 / MC58) protein is Large ribosomal subunit protein bL32 (rpmF).